Here is a 302-residue protein sequence, read N- to C-terminus: MKTGSEFHVGIVGLGSMGMGAALSYVRAGLSTWGADLNSNACATLKEAGACGVSDNAATFAEKLDALLVLVVNAAQVKQVLFGETGVAQHLKPGTAVMVSSTIASADAQEIATALAGFDLEMLDAPVSGGAVKAANGEMTVMASGSDIAFERLAPVLEAVAGKVYRIGAEPGLGSTVKIIHQLLAGVHIAAGAEAMALAARAGIPLDVMYDVVTNAAGNSWMFENRMRHVVDGDYTPHSAVDIFVKDLGLVADTAKALHFPLPLASTALNMFTSASNAGYGKEDDSAVIKIFSGITLPGAKS.

NAD(+) contacts are provided by residues 7 to 35 (FHVG…TWGA) and T102. K178 is an active-site residue. K246 is a binding site for NAD(+).

The protein belongs to the HIBADH-related family. L-threonate dehydrogenase subfamily.

It catalyses the reaction L-threonate + NAD(+) = 2-dehydro-L-erythronate + NADH + H(+). Its function is as follows. Catalyzes oxidation of L-threonate to 2-oxo-tetronate. Can use either NAD(+) or NADP(+) as cosubstrate, with a preference for NAD(+). The sequence is that of L-threonate dehydrogenase from Escherichia coli (strain K12).